A 151-amino-acid polypeptide reads, in one-letter code: Aspartate carbamoyltransferase regulatory chain (151 aa).

Cys-107, Cys-112, Cys-135, and Cys-138 together coordinate Zn(2+).

Belongs to the PyrI family. In terms of assembly, contains catalytic and regulatory chains. Requires Zn(2+) as cofactor.

Its function is as follows. Involved in allosteric regulation of aspartate carbamoyltransferase. The polypeptide is Aspartate carbamoyltransferase regulatory chain (Psychromonas ingrahamii (strain DSM 17664 / CCUG 51855 / 37)).